The sequence spans 476 residues: 3-isopropylmalate dehydratase large subunit (476 aa).

[4Fe-4S] cluster contacts are provided by cysteine 357, cysteine 417, and cysteine 420.

This sequence belongs to the aconitase/IPM isomerase family. LeuC type 1 subfamily. In terms of assembly, heterodimer of LeuC and LeuD. Requires [4Fe-4S] cluster as cofactor.

The catalysed reaction is (2R,3S)-3-isopropylmalate = (2S)-2-isopropylmalate. It participates in amino-acid biosynthesis; L-leucine biosynthesis; L-leucine from 3-methyl-2-oxobutanoate: step 2/4. In terms of biological role, catalyzes the isomerization between 2-isopropylmalate and 3-isopropylmalate, via the formation of 2-isopropylmaleate. The chain is 3-isopropylmalate dehydratase large subunit from Mycobacterium avium (strain 104).